The following is a 297-amino-acid chain: uncharacterized protein (297 aa).

The tract at residues 1–29 (MAESKAKNMFQKLSLTPKRNHEHDAGRNI) is disordered. Over residues 19–29 (RNHEHDAGRNI) the composition is skewed to basic and acidic residues.

This is an uncharacterized protein from Caenorhabditis elegans.